The primary structure comprises 160 residues: Nucleotide-binding protein Tola_0795 (160 aa).

The protein belongs to the YajQ family.

Functionally, nucleotide-binding protein. The protein is Nucleotide-binding protein Tola_0795 of Tolumonas auensis (strain DSM 9187 / NBRC 110442 / TA 4).